A 70-amino-acid chain; its full sequence is MTIINSISSLGKISNKNKIQTNLLNSKNYSNNSPNNIQGSNENTGIVSGVLIIVGGLAIVLGLVTSSTGL.

This sequence belongs to the UPF0519 family.

In Dictyostelium discoideum (Social amoeba), this protein is UPF0519 protein D.